The following is a 461-amino-acid chain: Thyroid hormone receptor beta (461 aa).

The segment at Met1–Gly24 is disordered. Residues Met1–Leu106 form a modulating region. The span at Asp15–Gly24 shows a compositional bias: basic and acidic residues. Cys107, Cys110, Cys124, Cys127, Cys145, Cys151, Cys161, and Cys164 together coordinate Zn(2+). 2 consecutive NR C4-type zinc fingers follow at residues Cys107–Cys127 and Cys145–Cys169. The nuclear receptor DNA-binding region spans Cys107 to Asp181. The NR LBD domain maps to Glu217–Asp461. The interaction with NR2F6 stretch occupies residues Lys244–Asp461. Residues Arg282, Asn331, and His435 each contribute to the 3,3',5-triiodo-L-thyronine site. Positions 282, 331, and 435 each coordinate L-thyroxine.

The protein belongs to the nuclear hormone receptor family. NR1 subfamily. As to quaternary structure, binds DNA as a dimer; homodimer and heterodimer with RXRB. Interacts with the coactivators NCOA1/SRC1, NCOA2/GRIP1, NCOA7 and MED1/TRAP220 in a ligand-inducible manner. Interacts with the corepressor NCOR1 in absence of ligand. Interacts with C1D. Interacts with NR2F6; the interaction impairs the binding of the THRB homodimer and THRB:RXRB heterodimer to T3 response elements. Interacts with PRMT2 and THRSP. Interacts with TACC1; this interaction is decreased in the presence of thyroid hormone T3.

Its subcellular location is the nucleus. In terms of biological role, nuclear hormone receptor that can act as a repressor or activator of transcription. High affinity receptor for thyroid hormones, including triiodothyronine and thyroxine. This chain is Thyroid hormone receptor beta (Thrb), found in Mus musculus (Mouse).